We begin with the raw amino-acid sequence, 156 residues long: Small ribosomal subunit protein uS7 (156 aa).

This sequence belongs to the universal ribosomal protein uS7 family. Part of the 30S ribosomal subunit. Contacts proteins S9 and S11.

Functionally, one of the primary rRNA binding proteins, it binds directly to 16S rRNA where it nucleates assembly of the head domain of the 30S subunit. Is located at the subunit interface close to the decoding center, probably blocks exit of the E-site tRNA. This Bartonella henselae (strain ATCC 49882 / DSM 28221 / CCUG 30454 / Houston 1) (Rochalimaea henselae) protein is Small ribosomal subunit protein uS7.